A 414-amino-acid chain; its full sequence is Serine/threonine transporter SstT (414 aa).

8 helical membrane-spanning segments follow: residues G16 to S36, L46 to V66, I84 to F104, A143 to L163, A180 to V200, L219 to F239, M300 to V320, and V332 to I352.

Belongs to the dicarboxylate/amino acid:cation symporter (DAACS) (TC 2.A.23) family.

The protein localises to the cell inner membrane. It catalyses the reaction L-serine(in) + Na(+)(in) = L-serine(out) + Na(+)(out). The enzyme catalyses L-threonine(in) + Na(+)(in) = L-threonine(out) + Na(+)(out). Functionally, involved in the import of serine and threonine into the cell, with the concomitant import of sodium (symport system). The protein is Serine/threonine transporter SstT of Salmonella dublin (strain CT_02021853).